The sequence spans 332 residues: Eukaryotic translation initiation factor 3 subunit H (332 aa).

Residues 18–153 enclose the MPN domain; sequence VQVDGLTVLK…LKAFRLSDEM (136 aa). Residues 251–285 are disordered; the sequence is QQQKENYLQRRQQENQSRIQRGEDPLPDEDLSKMF.

The protein belongs to the eIF-3 subunit H family. Component of the eukaryotic translation initiation factor 3 (eIF-3) complex.

The protein localises to the cytoplasm. Its function is as follows. Component of the eukaryotic translation initiation factor 3 (eIF-3) complex, which is involved in protein synthesis of a specialized repertoire of mRNAs and, together with other initiation factors, stimulates binding of mRNA and methionyl-tRNAi to the 40S ribosome. The eIF-3 complex specifically targets and initiates translation of a subset of mRNAs involved in cell proliferation. This Nematostella vectensis (Starlet sea anemone) protein is Eukaryotic translation initiation factor 3 subunit H.